We begin with the raw amino-acid sequence, 442 residues long: MFS transporter asaE (442 aa).

Residues 1–10 (MDRSRTSSQG) show a composition bias toward polar residues. A disordered region spans residues 1 to 43 (MDRSRTSSQGRDVLPPRGDEGRISPSLDKEKSPGPEDQPDAPP). A compositionally biased stretch (basic and acidic residues) spans 17–34 (RGDEGRISPSLDKEKSPG). The next 12 membrane-spanning stretches (helical) occupy residues 47–67 (LTAW…FGWV), 89–109 (TISW…PIVG), 119–139 (YLII…SIST), 150–170 (ICSA…VSAW), 177–197 (IAFA…PIMV), 206–226 (FGWS…IAIV), 252–272 (PVFI…FIPI), 288–307 (LASY…RLGA), 319–339 (IFIV…IPAT), 342–362 (APII…VSLS), 381–401 (LLFL…GAIL), and 413–433 (IFSG…RIVG).

This sequence belongs to the major facilitator superfamily. Monocarboxylate porter (TC 2.A.1.13) family.

The protein localises to the cell membrane. Its pathway is secondary metabolite biosynthesis. In terms of biological role, MFS transporter; part of the gene cluster that mediates the biosynthesis of aspergillic acid. Probably involved in aspergillic acid metabolism and transport. The chain is MFS transporter asaE from Aspergillus flavus (strain ATCC 200026 / FGSC A1120 / IAM 13836 / NRRL 3357 / JCM 12722 / SRRC 167).